The sequence spans 269 residues: Bis(5'-nucleosyl)-tetraphosphatase, symmetrical (269 aa).

It belongs to the Ap4A hydrolase family.

The catalysed reaction is P(1),P(4)-bis(5'-adenosyl) tetraphosphate + H2O = 2 ADP + 2 H(+). Functionally, hydrolyzes diadenosine 5',5'''-P1,P4-tetraphosphate to yield ADP. The chain is Bis(5'-nucleosyl)-tetraphosphatase, symmetrical from Vibrio vulnificus (strain YJ016).